We begin with the raw amino-acid sequence, 180 residues long: Translation initiation factor IF-3 (180 aa).

This sequence belongs to the IF-3 family. Monomer.

The protein resides in the cytoplasm. In terms of biological role, IF-3 binds to the 30S ribosomal subunit and shifts the equilibrium between 70S ribosomes and their 50S and 30S subunits in favor of the free subunits, thus enhancing the availability of 30S subunits on which protein synthesis initiation begins. This chain is Translation initiation factor IF-3, found in Mesoplasma florum (strain ATCC 33453 / NBRC 100688 / NCTC 11704 / L1) (Acholeplasma florum).